Consider the following 397-residue polypeptide: Probable peptidoglycan glycosyltransferase FtsW (397 aa).

The Cytoplasmic segment spans residues 1–18 (MSALTLTASKNTQTMTLD). The helical transmembrane segment at 19-39 (LPLLGSALALAAIGLIMVTSA) threads the bilayer. At 40-58 (SVDFADDANGQALYYMWRH) the chain is on the periplasmic side. Residues 59–79 (LTYLLAGVAVGFVILRLPLEW) form a helical membrane-spanning segment. Residues 80-83 (WHKQ) are Cytoplasmic-facing. A helical transmembrane segment spans residues 84-104 (SWLLLVVALGFLVAVLIPGIG). At 105–112 (RTVNGSTR) the chain is on the periplasmic side. Residues 113 to 133 (WISLGVINIQASEIAKVCLAI) traverse the membrane as a helical segment. The Cytoplasmic segment spans residues 134-148 (YTASYLVRRLDEVRG). The chain crosses the membrane as a helical span at residues 149 to 169 (SWWGFAKPLLVLMLVALLLLM). Over 170–172 (EPD) the chain is Periplasmic. A helical transmembrane segment spans residues 173-193 (FGALVVTMCAVVGMIFLSGVA). The Cytoplasmic segment spans residues 194–196 (LSR). The helical transmembrane segment at 197-217 (FAALLMFCVGSVALLAVSQPY) threads the bilayer. The Periplasmic portion of the chain corresponds to 218-272 (RLKRLTAYTDPWADQFDSGYQLTQALIAFGRGEWSGVGLGNSVQKLFYLPEAHTD). A helical transmembrane segment spans residues 273 to 293 (FVFAIIAEELGLLGSLLIIVL). Residues 294 to 316 (FGVLLWRGMYVSRVAERAGQLFN) lie on the Cytoplasmic side of the membrane. A helical membrane pass occupies residues 317–337 (AYAGYGVTLLLGGQALINLGV). Over 338–348 (NTGLLPTKGLT) the chain is Periplasmic. Residues 349–369 (LPLISYGGSSLIISCLCVAIL) form a helical membrane-spanning segment. Residues 370 to 397 (LRIGSEAVSGEQTEDESPKVKNRGGAQR) lie on the Cytoplasmic side of the membrane.

Belongs to the SEDS family. FtsW subfamily.

The protein localises to the cell inner membrane. The enzyme catalyses [GlcNAc-(1-&gt;4)-Mur2Ac(oyl-L-Ala-gamma-D-Glu-L-Lys-D-Ala-D-Ala)](n)-di-trans,octa-cis-undecaprenyl diphosphate + beta-D-GlcNAc-(1-&gt;4)-Mur2Ac(oyl-L-Ala-gamma-D-Glu-L-Lys-D-Ala-D-Ala)-di-trans,octa-cis-undecaprenyl diphosphate = [GlcNAc-(1-&gt;4)-Mur2Ac(oyl-L-Ala-gamma-D-Glu-L-Lys-D-Ala-D-Ala)](n+1)-di-trans,octa-cis-undecaprenyl diphosphate + di-trans,octa-cis-undecaprenyl diphosphate + H(+). It functions in the pathway cell wall biogenesis; peptidoglycan biosynthesis. Its function is as follows. Peptidoglycan polymerase that is essential for cell division. The protein is Probable peptidoglycan glycosyltransferase FtsW of Hahella chejuensis (strain KCTC 2396).